A 555-amino-acid polypeptide reads, in one-letter code: Formate--tetrahydrofolate ligase (555 aa).

64 to 71 serves as a coordination point for ATP; the sequence is TPAGEGKT.

It belongs to the formate--tetrahydrofolate ligase family.

It catalyses the reaction (6S)-5,6,7,8-tetrahydrofolate + formate + ATP = (6R)-10-formyltetrahydrofolate + ADP + phosphate. The protein operates within one-carbon metabolism; tetrahydrofolate interconversion. This chain is Formate--tetrahydrofolate ligase, found in Dinoroseobacter shibae (strain DSM 16493 / NCIMB 14021 / DFL 12).